The chain runs to 137 residues: Acyl carrier protein 4, chloroplastic (137 aa).

A chloroplast-targeting transit peptide spans 1 to 48; that stretch reads MASLSTTSLSFKAPSTTISQVLRKASSSQSVTFGRFTSSTKSLRLQIS. The 76-residue stretch at 53–128 folds into the Carrier domain; the sequence is AETVQKVSDI…EAADLIEDLV (76 aa). Position 88 is an O-(pantetheine 4'-phosphoryl)serine (Ser88).

The protein belongs to the acyl carrier protein (ACP) family. In terms of processing, 4'-phosphopantetheine is transferred from CoA to a specific serine of apo-ACP by acpS. This modification is essential for activity because fatty acids are bound in thioester linkage to the sulfhydryl of the prosthetic group.

It localises to the plastid. It is found in the chloroplast. In terms of biological role, carrier of the growing fatty acid chain in fatty acid biosynthesis that plays a major role in the biosynthesis of fatty acids in leaves. Required for the biosynthesis of chloroplast photosynthetic membrane lipids such as monogalactosyldiacylglycerol, digalactosyldiacylglycerol and phosphatidylglycerol. Is essential for the biosynthesis of the cuticular wax and cutin polymers in leaves, and for the establishment of systemic acquired resistance (SAR). The chain is Acyl carrier protein 4, chloroplastic (ACP4) from Arabidopsis thaliana (Mouse-ear cress).